A 611-amino-acid polypeptide reads, in one-letter code: Endo-1,4-beta-xylanase A (611 aa).

The first 26 residues, 1–26, serve as a signal peptide directing secretion; the sequence is MRTAMAKSLGAAAFLGAALFAHTLAA. The 102-residue stretch at 27–128 folds into the CBM2 domain; it reads QTATCSYNIT…SVGGSICSGS (102 aa). Intrachain disulfides connect cysteine 31–cysteine 125, cysteine 184–cysteine 215, and cysteine 194–cysteine 209. Residues 183–212 form the CBM10 domain; sequence QCNWYGTLYPLCVTTTNGWGWEDQRSCIAR. The 327-residue stretch at 281–607 folds into the GH10 domain; sequence SGGNADIFTS…KPAYQGVVEA (327 aa). The active-site Proton donor is glutamate 391. The Nucleophile role is filled by glutamate 510.

Belongs to the glycosyl hydrolase 10 (cellulase F) family.

The catalysed reaction is Endohydrolysis of (1-&gt;4)-beta-D-xylosidic linkages in xylans.. The protein operates within glycan degradation; xylan degradation. The protein is Endo-1,4-beta-xylanase A (xynA) of Cellvibrio japonicus (strain Ueda107) (Pseudomonas fluorescens subsp. cellulosa).